The chain runs to 152 residues: UPF0225 protein KPK_2103 (152 aa).

This sequence belongs to the UPF0225 family.

The chain is UPF0225 protein KPK_2103 from Klebsiella pneumoniae (strain 342).